The sequence spans 791 residues: Transient receptor potential cation channel subfamily V member 3 (791 aa).

Disordered stretches follow at residues 1–37 (MNAH…LTPT), 52–71 (PNPT…MDSN), and 76–113 (LSGN…EEQR). The Cytoplasmic segment spans residues 1–430 (MNAHSKEMAP…TLEPLHTLLH (430 aa)). Over residues 95–105 (ETPSNPNSPSA) the composition is skewed to polar residues. ANK repeat units follow at residues 117–148 (KRLK…LCRR), 170–198 (TCLM…EEND), 214–243 (EGQT…DVNA), 261–291 (FGET…DITS), 298–330 (NILH…RSGN), 340–362 (DGLT…YILS), and 398–420 (TTDN…HEML). The chain crosses the membrane as a helical span at residues 431 to 460 (TKWKKFAKYMFFLSFCFYFFYNITLTLVSY). Residues 461 to 479 (YRPREDEDLPHPLALTHKM) are Extracellular-facing. Residues 480–508 (SWLQLLGRMFVLIWATCISVKEGIAIFLL) traverse the membrane as a helical segment. At 509 to 519 (RPSDLQSILSD) the chain is on the cytoplasmic side. The helical transmembrane segment at 520 to 540 (AWFHFVFFVQAVLVILSVFLY) threads the bilayer. Over 541–545 (LFAYK) the chain is Extracellular. Residues 546-566 (EYLACLVLAMALGWANMLYYT) form a helical membrane-spanning segment. The Cytoplasmic portion of the chain corresponds to 567–569 (RGF). The chain crosses the membrane as a helical span at residues 570 to 608 (QSMGMYSVMIQKVILHDVLKFLFVYILFLLGFGVALASL). At 609-620 (IEKCSKDKKDCS) the chain is on the extracellular side. An intramembrane region (pore-forming) is located at residues 621 to 646 (SYGSFSDAVLELFKLTIGLGDLNIQQ). Na(+) is bound at residue Gly638. The Extracellular portion of the chain corresponds to 647 to 649 (NST). A helical transmembrane segment spans residues 650–686 (YPILFLFLLITYVILTFVLLLNMLIALMGETVENVSK). Residues 687–791 (ESERIWRLQR…ELDEFPETSV (105 aa)) lie on the Cytoplasmic side of the membrane.

This sequence belongs to the transient receptor (TC 1.A.4) family. TrpV subfamily. TRPV3 sub-subfamily. Homotetramer. May convert from a homotetramer to a homopentamer to allow pore dilation. Interacts with TRPV1; may form a heteromeric channel with TRPV1. Interacts with SNX11; this interaction promotes TRPV3 trafficking from the cell membrane to lysosome for degradation. Expressed in keratinocytes and hair follicles.

It is found in the cell membrane. Its subcellular location is the cytoplasm. The protein localises to the lysosome. It carries out the reaction Ca(2+)(in) = Ca(2+)(out). The catalysed reaction is Mg(2+)(in) = Mg(2+)(out). It catalyses the reaction Na(+)(in) = Na(+)(out). The enzyme catalyses K(+)(in) = K(+)(out). Activated by cannabinoid that binds to the vanilloid binding pocket. Diphenylboronic anhydride induces pore dilation and enhances cation permeability by promoting the conversion to a homopentamer. In terms of biological role, non-selective calcium permeant cation channel. It is activated by innocuous (warm) temperatures and shows an increased response at noxious temperatures greater than 39 degrees Celsius. Activation exhibits an outward rectification. The channel pore can dilate to provide permeability to larger cations. May associate with TRPV1 and may modulate its activity. Is a negative regulator of hair growth and cycling: TRPV3-coupled signaling suppresses keratinocyte proliferation in hair follicles and induces apoptosis and premature hair follicle regression (catagen). This is Transient receptor potential cation channel subfamily V member 3 (Trpv3) from Mus musculus (Mouse).